A 2278-amino-acid polypeptide reads, in one-letter code: 1-phosphatidylinositol 3-phosphate 5-kinase FAB1 (2278 aa).

Disordered stretches follow at residues 1–30 (MSSE…SVNT) and 76–144 (PPTS…LQLP). S2 is subject to N-acetylserine. Residues 2 to 676 (SSEEPHASIS…NSTKSFQRAQ (675 aa)) form a required for localization to the vacuole membrane region. Composition is skewed to low complexity over residues 18–28 (VRSSSTGTSSV) and 76–89 (PPTS…TSTS). Positions 90 to 128 (HVTGTASHSNIKANANTSTSVNKKNLPPTTSGRIPSSTI) are enriched in polar residues. Phosphoserine is present on S186. The FYVE-type zinc-finger motif lies at 240 to 299 (DESSKECFSCGKTFNTFRRKHHCRICGQIFCSSCTLLIDGDRFGCHAKMRVCYNCYEHAD). Positions 246, 249, 262, 265, 270, 273, 291, and 294 each coordinate Zn(2+). Disordered stretches follow at residues 302 to 337 (EDSS…HSHS), 472 to 500 (ITIN…NNPA), 514 to 534 (NSVN…AQSS), 556 to 697 (FNYN…PNNS), and 727 to 766 (DSSP…NINT). The span at 472–498 (ITINNLNNTTSNNSNYNNTNSNSNINN) shows a compositional bias: low complexity. Residues 557–570 (NYNSKGPSQQNDTA) are compositionally biased toward polar residues. The span at 571 to 601 (NGNNDNNNNNNNNNNNNNNNSASGIADNNNI) shows a compositional bias: low complexity. A compositionally biased stretch (polar residues) spans 602-611 (PSNDNGTTFT). A compositionally biased stretch (acidic residues) spans 634 to 644 (LNEEDSSEDEG). Positions 665-679 (MRNSTKSFQRAQASL) are enriched in polar residues. A compositionally biased stretch (basic residues) spans 682 to 692 (MRFRRKSKSKH). Residues 729–741 (SPLQDKASSSAAS) are compositionally biased toward polar residues. Residues 749-763 (SNSSGSNNNSNSNSN) are compositionally biased toward low complexity. The interval 766–1039 (TDPWKRIASI…KIKQVSEFMV (274 aa)) is CCT domain. The tract at residues 1181 to 1500 (SSSQNLLGTG…TAKQLKKLFY (320 aa)) is CCR domain. A compositionally biased stretch (basic and acidic residues) spans 1506–1554 (DSEDKKSLHDEKAKTRKPEKNELPLEGLKDVEKPKIDSKNTTENRDRTN). Positions 1506 to 1627 (DSEDKKSLHD…TRPNIRKMSS (122 aa)) are disordered. Positions 1555–1564 (EPQNAVTITT) are enriched in polar residues. Residues 1580 to 1595 (LTVTPSASSVSSSLTP) show a composition bias toward low complexity. S1627 and S1630 each carry phosphoserine. Positions 1766-1776 (SGKTTASTHLN) are enriched in polar residues. 2 disordered regions span residues 1766 to 1804 (SGKT…EPLP) and 1891 to 1972 (QQQQ…THSQ). Residues 1780-1799 (VVKETSENPKSIVRESDNSK) are compositionally biased toward basic and acidic residues. The segment covering 1918-1932 (DPSVNISPSVSTTSH) has biased composition (polar residues). In terms of domain architecture, PIPK spans 1932-2266 (HNKGRDSEIS…RFREAMERYI (335 aa)). S1938 is subject to Phosphoserine. A Phosphothreonine modification is found at T1953.

Component of the PI(3,5)P2 regulatory complex, composed of ATG18, FIG4, FAB1, VAC14 and VAC7. VAC14 nucleates the assembly of the complex and serves as a scaffold. Mg(2+) serves as cofactor. Mn(2+) is required as a cofactor.

It is found in the vacuole membrane. The protein resides in the endosome membrane. The catalysed reaction is a 1,2-diacyl-sn-glycero-3-phospho-(1D-myo-inositol-3-phosphate) + ATP = a 1,2-diacyl-sn-glycero-3-phospho-(1D-myo-inositol-3,5-bisphosphate) + ADP + H(+). It carries out the reaction 1,2-dihexadecanoyl-sn-glycero-3-phospho-(1D-myo-inositol-3-phosphate) + ATP = 1,2-dihexadecanoyl-sn-glycero-3-phospho-(1D-myo-inositol-3,5-phosphate) + ADP + H(+). Its activity is regulated as follows. Activated by VAC14 and VAC7. VAC14 acts as a specific osmotic response regulator. Functionally, the PI(3,5)P2 regulatory complex regulates both the synthesis and turnover of phosphatidylinositol 3,5-bisphosphate (PtdIns(3,5)P2). Catalyzes the phosphorylation of phosphatidylinositol 3-phosphate on the fifth hydroxyl of the myo-inositol ring, to form phosphatidylinositol 3,5-bisphosphate. Required for endocytic-vacuolar pathway and nuclear migration. The product of the reaction, PI(3,5)P2 is an important regulator of vacuole homeostasis perhaps by controlling membrane flux to and/or from the vacuole. PI(3,5)P2 regulates the transition between trans-SNARE complex formation and vacuole membrane fusion. Hyperosmotic shock-induced increase in the levels of PtdIns(3,5)P2 requires the presence of VAC7, VAC14, and/or FIG4. This is 1-phosphatidylinositol 3-phosphate 5-kinase FAB1 from Saccharomyces cerevisiae (strain ATCC 204508 / S288c) (Baker's yeast).